Reading from the N-terminus, the 639-residue chain is MVDYIVEYDYDAVHDDELTIRVGEIIRNVKKLQEEGWLEGELNGRRGMFPDNFVKEIKRETEFKDDSLPIKRERHGNVASLVQRISTYGLPAGGIQPHPQTKNIKKKTKKRQCKVLFEYIPQNEDELELKVGDIIDINEEVEEGWWSGTLNNKLGLFPSNFVKELEVTDDGETHEAQDDSETVLAGPTSPIPSLGNVSETASGSVTQPKKIRGIGFGDIFKEGSVKLRTRTSSSETEEKKPEKPLILQSLGPKTQSVEITKTDTEGKIKAKEYCRTLFAYEGTNEDELTFKEGEIIHLISKETGEAGWWRGELNGKEGVFPDNFAVQINELDKDFPKPKKPPPPAKAPAPKPELIAAEKKYFSLKPEEKDEKSTLEQKPSKPAAPQVPPKKPTPPTKASNLLRSSGTVYPKRPEKPVPPPPPIAKINGEVSSISSKFETEPVSKLKLDSEQLPLRPKSVDFDSLTVRTSKETDVVNFDDIASSENLLHLTANRPKMPGRRLPGRFNGGHSPTHSPEKILKLPKEEDSANLKPSELKKDTCYSPKPSVYLSTPSSASKANTTAFLTPLEIKAKVETDDVKKNSLDELRAQIIELLCIVEALKKDHGKELEKLRKDLEEEKTMRSNLEMEIEKLKKAVLSS.

Residues 1 to 59 (MVDYIVEYDYDAVHDDELTIRVGEIIRNVKKLQEEGWLEGELNGRRGMFPDNFVKEIKR) enclose the SH3 1; truncated domain. The interval 1-175 (MVDYIVEYDY…EVTDDGETHE (175 aa)) is interaction with ANLN and localization to the midbody. A Glycyl lysine isopeptide (Lys-Gly) (interchain with G-Cter in SUMO2) cross-link involves residue lysine 58. Phosphoserine occurs at positions 67, 80, and 86. One can recognise an SH3 2 domain in the interval 108–167 (TKKRQCKVLFEYIPQNEDELELKVGDIIDINEEVEEGWWSGTLNNKLGLFPSNFVKELEV). Over residues 168–177 (TDDGETHEAQ) the composition is skewed to basic and acidic residues. A disordered region spans residues 168-209 (TDDGETHEAQDDSETVLAGPTSPIPSLGNVSETASGSVTQPK). Polar residues predominate over residues 195–207 (GNVSETASGSVTQ). The residue at position 224 (serine 224) is a Phosphoserine. The disordered stretch occupies residues 227–256 (LRTRTSSSETEEKKPEKPLILQSLGPKTQS). An SH3 3 domain is found at 269–330 (KAKEYCRTLF…PDNFAVQINE (62 aa)). The segment at 333-428 (KDFPKPKKPP…PPPPIAKING (96 aa)) is disordered. Short sequence motifs (SH3-binding) lie at residues 336-352 (PKPK…APKP), 378-397 (KPSK…PPTK), and 410-422 (PKRP…PPPP). Positions 341-351 (PPPPAKAPAPK) are enriched in pro residues. Positions 356–379 (AAEKKYFSLKPEEKDEKSTLEQKP) are enriched in basic and acidic residues. Residues 385 to 395 (PQVPPKKPTPP) are compositionally biased toward pro residues. Phosphoserine occurs at positions 458, 463, 469, 510, and 514. Lysine 523 participates in a covalent cross-link: Glycyl lysine isopeptide (Lys-Gly) (interchain with G-Cter in SUMO2). Threonine 565 is modified (phosphothreonine). The stretch at 577–638 (DVKKNSLDEL…IEKLKKAVLS (62 aa)) forms a coiled coil. Residue serine 582 is modified to Phosphoserine.

As to quaternary structure, homodimer. Interacts with F-actin, PKD2, NPHS1 and NPHS2. Interacts with WTIP. Interacts with DDN; interaction is direct. Interacts (via SH3 2 domain) with CBL (via phosphorylated C-terminus). Interacts with BCAR1/p130Cas (via SH3 domain). Interacts with MVB12A and ARHGAP17. Interacts with ANLN, CD2 and CBLB. Interacts with PDCD6IP and TSG101. Interacts with RIN3. Interacts directly with RET (inactive) and CBLC; upon RET activation by GDNF suggested to dissociate from RET as CBLC:CD2AP complex. Interacts with CGNL1 and SH3BP1; probably part of a complex at cell junctions. Interacts with CAPZA1. (Microbial infection) Interacts (via SH3 domains) with Chikungunya virus non-structural protein 3 (via C-terminus); this interaction plays a role in initiation of viral replication. Phosphorylated on tyrosine residues; probably by c-Abl, Fyn and c-Src. Widely expressed in fetal and adult tissues.

It is found in the cytoplasm. It localises to the cytoskeleton. Its subcellular location is the cell projection. The protein resides in the ruffle. The protein localises to the cell junction. In terms of biological role, seems to act as an adapter protein between membrane proteins and the actin cytoskeleton. In collaboration with CBLC, modulates the rate of RET turnover and may act as regulatory checkpoint that limits the potency of GDNF on neuronal survival. Controls CBLC function, converting it from an inhibitor to a promoter of RET degradation. May play a role in receptor clustering and cytoskeletal polarity in the junction between T-cell and antigen-presenting cell. May anchor the podocyte slit diaphragm to the actin cytoskeleton in renal glomerolus. Also required for cytokinesis. Plays a role in epithelial cell junctions formation. This is CD2-associated protein (CD2AP) from Homo sapiens (Human).